A 342-amino-acid polypeptide reads, in one-letter code: Phosphate acyltransferase (342 aa).

The protein belongs to the PlsX family. As to quaternary structure, homodimer. Probably interacts with PlsY.

Its subcellular location is the cytoplasm. The enzyme catalyses a fatty acyl-[ACP] + phosphate = an acyl phosphate + holo-[ACP]. It functions in the pathway lipid metabolism; phospholipid metabolism. Catalyzes the reversible formation of acyl-phosphate (acyl-PO(4)) from acyl-[acyl-carrier-protein] (acyl-ACP). This enzyme utilizes acyl-ACP as fatty acyl donor, but not acyl-CoA. The protein is Phosphate acyltransferase of Shewanella sediminis (strain HAW-EB3).